We begin with the raw amino-acid sequence, 67 residues long: Putative ATP synthase subunit epsilon, mitochondrial (67 aa).

It belongs to the eukaryotic ATPase epsilon family. F-type ATPases have 2 components, CF(1) - the catalytic core - and CF(0) - the membrane proton channel. CF(1) has five subunits: alpha(3), beta(3), gamma(1), delta(1), epsilon(1). CF(0) seems to have nine subunits: a, b, c, d, e, f, g, F6 and 8 (or A6L).

Its subcellular location is the mitochondrion. The protein localises to the mitochondrion inner membrane. Mitochondrial membrane ATP synthase (F(1)F(0) ATP synthase or Complex V) produces ATP from ADP in the presence of a proton gradient across the membrane which is generated by electron transport complexes of the respiratory chain. F-type ATPases consist of two structural domains, F(1) - containing the extramembraneous catalytic core, and F(0) - containing the membrane proton channel, linked together by a central stalk and a peripheral stalk. During catalysis, ATP synthesis in the catalytic domain of F(1) is coupled via a rotary mechanism of the central stalk subunits to proton translocation. Part of the complex F(1) domain and of the central stalk which is part of the complex rotary element. Rotation of the central stalk against the surrounding alpha(3)beta(3) subunits leads to hydrolysis of ATP in three separate catalytic sites on the beta subunits. The sequence is that of Putative ATP synthase subunit epsilon, mitochondrial (atp15) from Schizosaccharomyces pombe (strain 972 / ATCC 24843) (Fission yeast).